We begin with the raw amino-acid sequence, 831 residues long: Pleckstrin homology-like domain family B member 1 (831 aa).

Over residues Leu1–Arg11 the composition is skewed to basic residues. The segment at Leu1–Ile73 is disordered. Position 6 is an omega-N-methylarginine (Arg6). Residues Ser12 and Ser14 each carry the phosphoserine modification. At Thr16 the chain carries Phosphothreonine. Residues Ser27, Ser33, Ser45, Ser49, Ser57, Ser72, Ser77, and Ser175 each carry the phosphoserine modification. The span at Gly39–His51 shows a compositional bias: polar residues. Disordered regions lie at residues Arg160–Glu209 and Asn416–Thr465. A compositionally biased stretch (basic and acidic residues) spans Glu174 to Cys188. Residues Asp180–Glu306 are a coiled coil. Residues Ser421 and Ser467 each carry the phosphoserine modification. Over residues Ser421–Ser442 the composition is skewed to low complexity. The interval Ser584–Ser603 is disordered. The stretch at Met610–Leu676 forms a coiled coil. Residues Ser721–Glu824 form the PH domain.

The protein is Pleckstrin homology-like domain family B member 1 (Phldb1) of Rattus norvegicus (Rat).